The chain runs to 338 residues: NADH-quinone oxidoreductase subunit H (338 aa).

Helical transmembrane passes span 22–42 (VVQAVVILLVVVLVAALMSFI), 96–116 (VAMATAVLSFMVIPVSPALGV), 121–141 (IGLLFFMAMAGIAVYAVLFGG), 161–181 (ISYEVFLGISLMGVVAIAGSF), 193–213 (VWFIIPQFLGFLIFVVAGVAV), 249–269 (YVNVVLISALIVTLFFGGWLA), 277–297 (FVPPVFWFVIKTAFFVMMFVL), and 315–335 (WKICLPLALVNLLVTGAVILM).

This sequence belongs to the complex I subunit 1 family. As to quaternary structure, NDH-1 is composed of 14 different subunits. Subunits NuoA, H, J, K, L, M, N constitute the membrane sector of the complex.

It is found in the cell inner membrane. It carries out the reaction a quinone + NADH + 5 H(+)(in) = a quinol + NAD(+) + 4 H(+)(out). NDH-1 shuttles electrons from NADH, via FMN and iron-sulfur (Fe-S) centers, to quinones in the respiratory chain. The immediate electron acceptor for the enzyme in this species is believed to be ubiquinone. Couples the redox reaction to proton translocation (for every two electrons transferred, four hydrogen ions are translocated across the cytoplasmic membrane), and thus conserves the redox energy in a proton gradient. This subunit may bind ubiquinone. The polypeptide is NADH-quinone oxidoreductase subunit H (Acinetobacter baumannii (strain ATCC 17978 / DSM 105126 / CIP 53.77 / LMG 1025 / NCDC KC755 / 5377)).